The following is a 55-amino-acid chain: UPF0434 protein BPEN_388 (55 aa).

The protein belongs to the UPF0434 family.

The sequence is that of UPF0434 protein BPEN_388 from Blochmanniella pennsylvanica (strain BPEN).